We begin with the raw amino-acid sequence, 193 residues long: Ion-translocating oxidoreductase complex subunit A (193 aa).

Transmembrane regions (helical) follow at residues 5–25 (ILLI…FLGL), 39–59 (IGMG…AYLV), 65–85 (IPLE…AVIV), 102–122 (LLGI…VALL), 134–154 (VLYG…FSAL), and 171–191 (SIAL…TGLV).

It belongs to the NqrDE/RnfAE family. The complex is composed of six subunits: RnfA, RnfB, RnfC, RnfD, RnfE and RnfG.

The protein localises to the cell inner membrane. Functionally, part of a membrane-bound complex that couples electron transfer with translocation of ions across the membrane. This Glaesserella parasuis serovar 5 (strain SH0165) (Haemophilus parasuis) protein is Ion-translocating oxidoreductase complex subunit A.